We begin with the raw amino-acid sequence, 88 residues long: MAHKKGASSSRNGRDSAAQRLGVKRFGGQIVKAGEIIVRQRGTKFHPGTGVGRGGDDTLFAKQAGAVEFGIKRGRKTVNIVAAGQAAD.

Residues 1–21 (MAHKKGASSSRNGRDSAAQRL) form a disordered region.

It belongs to the bacterial ribosomal protein bL27 family.

The sequence is that of Large ribosomal subunit protein bL27 from Mycobacterium avium (strain 104).